The following is a 159-amino-acid chain: Ribosome maturation factor RimP (159 aa).

Belongs to the RimP family.

The protein localises to the cytoplasm. Functionally, required for maturation of 30S ribosomal subunits. This chain is Ribosome maturation factor RimP, found in Streptococcus pneumoniae serotype 2 (strain D39 / NCTC 7466).